Here is a 330-residue protein sequence, read N- to C-terminus: Putative protein DDB_G0285185 (330 aa).

A disordered region spans residues 212-240 (NKLQNQVQSSPKLSSPITKNKEQIVSTTS). Residues 214 to 240 (LQNQVQSSPKLSSPITKNKEQIVSTTS) show a composition bias toward polar residues.

The protein is Putative protein DDB_G0285185 of Dictyostelium discoideum (Social amoeba).